Here is a 583-residue protein sequence, read N- to C-terminus: AP-1-like transcription factor YAP1 (583 aa).

The disordered stretch occupies residues 1-86 (MSTSTAKRPF…KELEDKVSQL (86 aa)). Basic and acidic residues predominate over residues 8 to 17 (RPFDNKRAGS). The span at 24 to 36 (SDSGGNNSGSSPA) shows a compositional bias: low complexity. A compositionally biased stretch (basic residues) spans 37–46 (SKRRERKPGR). Residues 41-48 (ERKPGRKP) carry the Bipartite nuclear localization signal motif. Composition is skewed to basic and acidic residues over residues 47–58 (KPLETEAKDKRT) and 67–84 (AFRERRERKMKELEDKVS). In terms of domain architecture, bZIP spans 51-114 (TEAKDKRTAQ…TNLLSELKRY (64 aa)). Residues 54–77 (KDKRTAQNRAAQRAFRERRERKMK) are basic motif. Residues 79–86 (LEDKVSQL) are leucine-zipper. The Bipartite nuclear localization signal motif lies at 120 to 127 (KKRDSILL). Residues 177 to 195 (SKIPSPSSDSTSPSASTSI) are compositionally biased toward low complexity. Positions 177 to 233 (SKIPSPSSDSTSPSASTSILDNANNKSVSSTNLNHSRSSISNSSSSPSNVNGLSSRK) are disordered. The segment covering 196–207 (LDNANNKSVSST) has biased composition (polar residues). Residues 208–230 (NLNHSRSSISNSSSSPSNVNGLS) are compositionally biased toward low complexity. A n-CRD region spans residues 265–272 (CSKLSMAC). 2 disulfide bridges follow: cysteine 265–cysteine 531 and cysteine 272–cysteine 562. Disordered regions lie at residues 275–329 (KSNP…SASA) and 350–373 (QYNDSSHSQATPNGLDNDSSVSAW). Over residues 297-312 (KSNSNVNITNHNNNKI) the composition is skewed to low complexity. Residues 316 to 329 (DLSSSAPLHDSASA) show a composition bias toward polar residues. The segment at 531-562 (CSEVWDRITAHPRYSDLDIDGLCLELRTKAKC) is c-CRD. Residues 547-554 (LDIDGLCL) carry the Nuclear export signal motif.

Belongs to the bZIP family. YAP subfamily. Oxidative stress induces conformational changes through oxidation of cysteine residues, masking the nuclear export signal, thus abolishing nuclear export by CRM1/exportin 1.

Its subcellular location is the nucleus. The protein resides in the cytoplasm. Functionally, transcription activator involved in oxidative stress response and cadmium resistance. Regulates the transcription of genes encoding antioxidant enzymes and components of the cellular thiol-reducing pathways. Activity of the transcription factor is controlled through oxidation of specific cysteine residues resulting in the alteration of its subcellular location. Activation by alkyl hydroperoxides or cadmium induces nuclear accumulation and as a result YAP1 transcriptional activity. This Kluyveromyces lactis (strain ATCC 8585 / CBS 2359 / DSM 70799 / NBRC 1267 / NRRL Y-1140 / WM37) (Yeast) protein is AP-1-like transcription factor YAP1 (YAP1).